A 293-amino-acid chain; its full sequence is Formamidopyrimidine-DNA glycosylase (293 aa).

Pro2 functions as the Schiff-base intermediate with DNA in the catalytic mechanism. Glu3 acts as the Proton donor in catalysis. The Proton donor; for beta-elimination activity role is filled by Lys58. DNA-binding residues include His104, Arg123, and Lys166. Residues 257–293 form an FPG-type zinc finger; it reads AVYDRESEPCRTKGCGGVVKRFVQNGRSTFCCPKCQK. The active-site Proton donor; for delta-elimination activity is the Arg283.

Belongs to the FPG family. In terms of assembly, monomer. Zn(2+) serves as cofactor.

It carries out the reaction Hydrolysis of DNA containing ring-opened 7-methylguanine residues, releasing 2,6-diamino-4-hydroxy-5-(N-methyl)formamidopyrimidine.. The catalysed reaction is 2'-deoxyribonucleotide-(2'-deoxyribose 5'-phosphate)-2'-deoxyribonucleotide-DNA = a 3'-end 2'-deoxyribonucleotide-(2,3-dehydro-2,3-deoxyribose 5'-phosphate)-DNA + a 5'-end 5'-phospho-2'-deoxyribonucleoside-DNA + H(+). Functionally, involved in base excision repair of DNA damaged by oxidation or by mutagenic agents. Acts as a DNA glycosylase that recognizes and removes damaged bases. Has a preference for oxidized purines, such as 7,8-dihydro-8-oxoguanine (8-oxoG). Has AP (apurinic/apyrimidinic) lyase activity and introduces nicks in the DNA strand. Cleaves the DNA backbone by beta-delta elimination to generate a single-strand break at the site of the removed base with both 3'- and 5'-phosphates. This is Formamidopyrimidine-DNA glycosylase from Rhodopseudomonas palustris (strain BisA53).